A 482-amino-acid chain; its full sequence is Putative metabolite transport protein YfiG (482 aa).

Topologically, residues 1–29 are cytoplasmic; sequence MSTKKKEAVIGKESLAHKGLLRTITLVST. Residues 30–50 traverse the membrane as a helical segment; sequence FGGLLFGYDTGVINGALPFMA. At 51-59 the chain is on the extracellular side; it reads TAGQLNLTP. The chain crosses the membrane as a helical span at residues 60–80; that stretch reads VTEGLVASSLLLGAAFGAMFG. Over 81-92 the chain is Cytoplasmic; it reads GRLSDRHGRRKT. The chain crosses the membrane as a helical span at residues 93–113; that stretch reads ILYLALLFIAATLGCTFSPNA. Topologically, residues 114 to 120 are extracellular; that stretch reads SVMIAFR. A helical membrane pass occupies residues 121 to 141; sequence FLLGLAVGCASVTVPTFLAEI. The Cytoplasmic portion of the chain corresponds to 142 to 155; it reads SPAERRGRIVTQNE. Residues 156 to 176 form a helical membrane-spanning segment; the sequence is LMIVIGQLLAYTFNAIIGSTM. Over 177–184 the chain is Extracellular; it reads GESANVWR. The chain crosses the membrane as a helical span at residues 185-205; sequence YMLVIATLPAVVLWFGMLIVP. Residues 206-263 lie on the Cytoplasmic side of the membrane; sequence ESPRWLAAKGRMGDALRVLRQIREDSQAQQEIKEIKHAIEGTAKKAGFHDFQEPWIRR. The helical transmembrane segment at 264-284 threads the bilayer; sequence ILFIGIGIAIVQQITGVNSIM. Residues 285-301 lie on the Extracellular side of the membrane; it reads YYGTEILREAGFQTEAA. The chain crosses the membrane as a helical span at residues 302–322; that stretch reads LIGNIANGVISVIAVIFGIWL. Residues 323-331 lie on the Cytoplasmic side of the membrane; the sequence is LGKVRRRPM. The next 2 membrane-spanning stretches (helical) occupy residues 332–352 and 353–373; these read LIIG…LSIV and LEGT…FLAF. Topologically, residues 374-400 are cytoplasmic; the sequence is QQTAISTVTWLMLSEIFPMHVRGLGMG. Residues 401–421 form a helical membrane-spanning segment; it reads ISTFCLWTANFLIGFTFPILL. The Extracellular segment spans residues 422-423; the sequence is NH. The chain crosses the membrane as a helical span at residues 424–444; sequence IGMSATFFIFVAMNILAILFV. The Cytoplasmic portion of the chain corresponds to 445–482; the sequence is KKYVPETKGRSLEQLEHSFRQYGRRADQEIQNQTTHLS.

It belongs to the major facilitator superfamily. Sugar transporter (TC 2.A.1.1) family.

The protein localises to the cell membrane. This chain is Putative metabolite transport protein YfiG (yfiG), found in Bacillus subtilis (strain 168).